A 792-amino-acid polypeptide reads, in one-letter code: Lon protease (792 aa).

Positions 16–208 (LPILPLRETV…KVTYYLTREL (193 aa)) constitute a Lon N-terminal domain. Position 360 to 367 (360 to 367 (GPPGVGKT)) interacts with ATP. Positions 597–778 (KDEVGVATGL…DEVLNLALLE (182 aa)) constitute a Lon proteolytic domain. Residues serine 684 and lysine 727 contribute to the active site.

This sequence belongs to the peptidase S16 family. Homohexamer. Organized in a ring with a central cavity.

Its subcellular location is the cytoplasm. It catalyses the reaction Hydrolysis of proteins in presence of ATP.. Functionally, ATP-dependent serine protease that mediates the selective degradation of mutant and abnormal proteins as well as certain short-lived regulatory proteins. Required for cellular homeostasis and for survival from DNA damage and developmental changes induced by stress. Degrades polypeptides processively to yield small peptide fragments that are 5 to 10 amino acids long. Binds to DNA in a double-stranded, site-specific manner. The chain is Lon protease from Dictyoglomus thermophilum (strain ATCC 35947 / DSM 3960 / H-6-12).